Reading from the N-terminus, the 211-residue chain is RNA chaperone ProQ (211 aa).

The segment at 113-147 is disordered; that stretch reads RRAVEKANNPKANKKRSVYHSGNKSENKKSAGKKF.

It belongs to the ProQ family.

It is found in the cytoplasm. In terms of biological role, RNA chaperone with significant RNA binding, RNA strand exchange and RNA duplexing activities. This chain is RNA chaperone ProQ, found in Histophilus somni (strain 129Pt) (Haemophilus somnus).